An 808-amino-acid polypeptide reads, in one-letter code: MLVSRFASRFRKDSSTEMVRTNLAHRKSLSQKENRHRVYERNRHFGLKDVNIPLEGRELGNIHETSQDLSPEKASSKTRSVKMVLSDQRKQLLQKYKEEKQLQKLKEQREKAKRGVFKVGLYRPAAPGFLVTDQRGAKAEPEKAFPHTGRITRSKTKEYMEQTKIGSRNVPKATQSDQRQTSEKQPLDRERKVMQPVLFTSGKGTESAATQRAKLMARTVSSTTRKPVTRATNEKGSERMRPSGGRPAKKPEGKPDKVIPSKVERDEKHLDSQTRETSEMGPLGVFREVESLPATAPAQGKERKSFAPKHCVFQPPCGLKSYQVAPLSPRSANAFLTPNCDWNQLRPEVFSTTTQDKANEILVQQGLESLTDRSKEHVLNQKGASTSDSNHASVKGVPCSEGSEGQTSQPPHDVPYFRKILQSETDRLTSHCLEWEGKLDLDISDEAKGLIRTTVGQTRLLIKERFRQFEGLVDNCEYKRGEKETTCTDLDGFWDMVSFQVDDVNQKFNNLIKLEASGWKDSNNPSKKVLRKKIVPGRTSKAKQDDDGRAAARSRLAAIKNAMKGRPQQEVQAHAAAPETTKEVDKIVFDAGFFRIESPVKSFSVLSSERRSQRFGTPLSASKVVPEGRAAGDLLRQKMPLKKPDPQSSKSEHVDRTFSDGLESRCHVEDTPCPGEQDSSDIEHDVNKINVKMDCFSVETNLPLPAGDANTNQKEAISAVEGASTAVTSQDLLMSNPETNTSSQSNTSQEEAEASQSVLLHKSLTSECHLLEPPGLSCTSPCTREETRQPDRSRQFSFGGDLILFSPL.

2 positions are modified to phosphoserine: serine 66 and serine 70. Residues 88 to 119 are a coiled coil; the sequence is QRKQLLQKYKEEKQLQKLKEQREKAKRGVFKV. The interval 134-282 is disordered; that stretch reads QRGAKAEPEK…QTRETSEMGP (149 aa). Basic and acidic residues-rich tracts occupy residues 135–145 and 180–193; these read RGAKAEPEKAF and QTSEKQPLDRERKV. Phosphoserine is present on serine 201. 2 stretches are compositionally biased toward basic and acidic residues: residues 232–241 and 249–278; these read TNEKGSERMR and KKPEGKPDKVIPSKVERDEKHLDSQTRETS. Serine 328 carries the phosphoserine modification. Phosphothreonine is present on residues threonine 337 and threonine 386. Residues 377 to 413 are disordered; sequence HVLNQKGASTSDSNHASVKGVPCSEGSEGQTSQPPHD. Residues 382–392 are compositionally biased toward polar residues; it reads KGASTSDSNHA. Serine 598 carries the post-translational modification Phosphoserine. Phosphoserine; by AURKA is present on serine 607. Serine 612 carries the post-translational modification Phosphoserine. Threonine 617 is subject to Phosphothreonine. Serine 620 is modified (phosphoserine). Residues 629-654 form a disordered region; sequence RAAGDLLRQKMPLKKPDPQSSKSEHV. Basic and acidic residues predominate over residues 642–654; it reads KKPDPQSSKSEHV. The residue at position 728 (threonine 728) is a Phosphothreonine. Positions 735–757 are disordered; the sequence is SNPETNTSSQSNTSQEEAEASQS. At serine 743 the chain carries Phosphoserine. Serine 797 carries the post-translational modification Phosphoserine; by AURKA. Serine 806 is subject to Phosphoserine.

Belongs to the SAPAP family. As to quaternary structure, interacts with CDC2. Interacts with the C-terminal proline-rich region of FBXO7. Recruited by FBXO7 to a SCF (SKP1-CUL1-F-box) protein complex in a CDC2/Cyclin B-phosphorylation dependent manner. Interacts with CDH1. Post-translationally, ubiquitinated, leading to its degradation. Decreased phosphorylation levels are associated with the differentiation of intestinal epithelial cells. As to expression, expressed at low levels in normal resting liver. Up-regulated in regenerating liver after partial hepatectomy.

The protein resides in the nucleus. The protein localises to the cytoplasm. It is found in the cytoskeleton. Its subcellular location is the spindle. In terms of biological role, potential cell cycle regulator that may play a role in carcinogenesis of cancer cells. Mitotic phosphoprotein regulated by the ubiquitin-proteasome pathway. Key regulator of adherens junction integrity and differentiation that may be involved in CDH1-mediated adhesion and signaling in epithelial cells. This chain is Disks large-associated protein 5 (Dlgap5), found in Mus musculus (Mouse).